The sequence spans 546 residues: uncharacterized protein (546 aa).

This sequence belongs to the IIV-6 098R family.

This is an uncharacterized protein from Aedes vexans (Inland floodwater mosquito).